Reading from the N-terminus, the 326-residue chain is Vitamin B12 import system permease protein BtuC (326 aa).

A run of 9 helical transmembrane segments spans residues 19 to 39, 61 to 81, 88 to 108, 112 to 132, 146 to 166, 184 to 204, 240 to 260, 274 to 294, and 302 to 322; these read LSVL…LWIL, LAVL…QALF, PGLL…VLLG, LPNW…TLIL, LLAG…AIYF, GGVD…LLWI, GWMV…GLVI, VLLP…DIVA, and ELPI…WLLL.

It belongs to the binding-protein-dependent transport system permease family. FecCD subfamily. In terms of assembly, the complex is composed of two ATP-binding proteins (BtuD), two transmembrane proteins (BtuC) and a solute-binding protein (BtuF).

The protein localises to the cell inner membrane. Part of the ABC transporter complex BtuCDF involved in vitamin B12 import. Involved in the translocation of the substrate across the membrane. The sequence is that of Vitamin B12 import system permease protein BtuC from Escherichia coli O127:H6 (strain E2348/69 / EPEC).